The primary structure comprises 315 residues: MSAATPLIVQQAEAEQLLARIDVLQAMRQLFLDLAAGQALQPAQQLVEFPAGRGDFINYLGVLAQEQVYGVKTSPYIVREQGPLVTAWTLLMSMQTGQPLLLCDAARLTTARTAATTAVAVDALAPAEACRLALIGSGPVAHAHLQYVKGLRDWQGVRVHSPCLDERRLQSLRAIDPRAEAAGSLEEALDEADVILLCTSSARAVIDPRQLKRPALVTSISTNAPRAHEVPAESLAAMDVYCDYRHTTPGSAGEMLIAAEQHGWSPEAIRGDLAELLSAQAPRPEYRRPAFFRSIGLGLEDVALANALYRLRQAG.

Belongs to the ornithine cyclodeaminase/mu-crystallin family.

The catalysed reaction is L-arginine + NAD(+) + H2O = 5-guanidino-2-oxopentanoate + NH4(+) + NADH + H(+). The enzyme catalyses L-arginine + NADP(+) + H2O = 5-guanidino-2-oxopentanoate + NH4(+) + NADPH + H(+). Its function is as follows. Involved in the anabolism of D-lysine and D-arginine. Under aerobic conditions, the arginine succinyltransferase (AST) and arginine transaminase (ATA) pathways are 2 major routes for L-arginine utilization as the sole source of carbon and nitrogen. The D-to-L racemization of arginine by DauA and DauB is necessary, before to be channeled into the AST and/or ATA pathways. DauB catalyzes the synthesis of L-arginine from 2-ketoarginine (2-KA) and ammonium. The protein is NAD(P)H-dependent anabolic L-arginine dehydrogenase DauB of Pseudomonas aeruginosa (strain ATCC 15692 / DSM 22644 / CIP 104116 / JCM 14847 / LMG 12228 / 1C / PRS 101 / PAO1).